Consider the following 234-residue polypeptide: Probable septum site-determining protein MinC (234 aa).

Belongs to the MinC family. As to quaternary structure, interacts with MinD and FtsZ.

Cell division inhibitor that blocks the formation of polar Z ring septums. Rapidly oscillates between the poles of the cell to destabilize FtsZ filaments that have formed before they mature into polar Z rings. Prevents FtsZ polymerization. The protein is Probable septum site-determining protein MinC of Pseudoalteromonas translucida (strain TAC 125).